The primary structure comprises 256 residues: uncharacterized protein (256 aa).

The next 2 membrane-spanning stretches (helical) occupy residues 181–201 and 231–251; these read CCII…ASMV and GIAV…GLIA.

The protein localises to the cell membrane. This is an uncharacterized protein from Methanocaldococcus jannaschii (strain ATCC 43067 / DSM 2661 / JAL-1 / JCM 10045 / NBRC 100440) (Methanococcus jannaschii).